The sequence spans 239 residues: Ribosomal RNA small subunit methyltransferase G (239 aa).

S-adenosyl-L-methionine contacts are provided by residues Gly-78, Phe-83, 129–130 (AE), and Arg-148.

This sequence belongs to the methyltransferase superfamily. RNA methyltransferase RsmG family.

It localises to the cytoplasm. Its function is as follows. Specifically methylates the N7 position of a guanine in 16S rRNA. The protein is Ribosomal RNA small subunit methyltransferase G of Alkaliphilus oremlandii (strain OhILAs) (Clostridium oremlandii (strain OhILAs)).